The sequence spans 1146 residues: Myosin heavy chain kinase A (1146 aa).

The segment at 1–25 is disordered; the sequence is MFNIKKRKESITGIPPINVNSPQSV. A coiled-coil region spans residues 100–120; it reads EQMEDQLEKTMKVVRNHTDSL. The disordered stretch occupies residues 158-191; it reads IQEKKSTSSPLVKGGISGGGGSGGDDSFDGANIS. Over residues 172-181 the composition is skewed to gly residues; it reads GISGGGGSGG. 2 coiled-coil regions span residues 187–241 and 297–502; these read GANI…KRIE and SKIE…ASIS. Residues 500–551 form a pseudosubstrate/autoinhibitory domain region; the sequence is SISPISSVPKSPITTKRSSIILNSPPMTSQQSSPKIQDLLSSSGSSSVSGIN. A compositionally biased stretch (polar residues) spans 521 to 534; it reads LNSPPMTSQQSSPK. The interval 521–540 is disordered; that stretch reads LNSPPMTSQQSSPKIQDLLS. Residues 552-852 form a catalytic region; that stretch reads ISSETGEMGI…KVGAKQLPKA (301 aa). An Alpha-type protein kinase domain is found at 564 to 808; the sequence is EFDPIINKWI…VCALLDLDVK (245 aa). An ATP-binding site is contributed by 778–783; the sequence is GLGNLG. WD repeat units lie at residues 867–897, 910–938, 952–980, 993–1021, 1033–1061, 1073–1101, and 1114–1142; these read SFRE…RVFD, GHRK…KVHI, GHTG…KVWD, VHTK…YVWD, GHED…KIWD, GHWN…KVWD, and SHSL…KVWE.

This sequence belongs to the protein kinase superfamily. Alpha-type protein kinase family. ALPK subfamily. In terms of assembly, oligomer. It depends on Mg(2+) as a cofactor. Mn(2+) is required as a cofactor. The N-terminus is blocked.

The enzyme catalyses L-threonyl-[myosin heavy-chain] + ATP = O-phospho-L-threonyl-[myosin heavy-chain] + ADP + H(+). Catalyzes its autophosphorylation, which is needed for enzymatic activity and phosphorylates myosin II heavy chain at a threonine in the C-terminal tail region. This phosphorylation is critical for regulating the assembly and disassembly of myosin II filament, affecting myosin localization during an array of cellular contractile events, including cytokinesis and capping of cell surface receptors as well as chemotactic cell locomotion. The polypeptide is Myosin heavy chain kinase A (mhkA) (Dictyostelium discoideum (Social amoeba)).